The sequence spans 345 residues: MNNWVTTYENHNYGLVISSRIRLARNLAKIPFSHKLNIEESKKVIKNVENAFYTFSNTEEKFKSNYLWDKNDNEKNIYLEKHLISKNLIDNSSKAAFILDDKETISIMINEEDHVRIQCITGGLNLEEVYDVSEKIDDLLEENLEYAFDEKLGYLTACPTNVGTGLRASVMLHLPSLSLNNQINGFLNALAQVGMTIRGLYGEGSKAIGNIYQISNQVTLGRSEEEILSNLKALVLQIINQEIISRENLMKKYKYELEDKIYRALGVLKSAVLLNSSECLKLLSDVRLGVEMGIIKDVNGITLNKLLVESQPATIQKIYGESLSNKDRDFNRAKFVREKLAVNTA.

Residues 15-245 (LVISSRIRLA…LQIINQEIIS (231 aa)) form the Phosphagen kinase C-terminal domain. ATP contacts are provided by residues 18 to 22 (SSRIR), His-82, Arg-116, 167 to 171 (RASVM), and 198 to 203 (RGLYGE). The RDXXRA motif of the pArg binding pocket involved in allosteric regulation signature appears at 328–333 (RDFNRA).

This sequence belongs to the ATP:guanido phosphotransferase family.

The enzyme catalyses L-arginyl-[protein] + ATP = N(omega)-phospho-L-arginyl-[protein] + ADP + H(+). With respect to regulation, appears to be allosterically activated by the binding of pArg-containing polypeptides to the pArg-binding pocket localized in the C-terminal domain of McsB. In terms of biological role, catalyzes the specific phosphorylation of arginine residues in proteins. This is Protein-arginine kinase from Clostridium kluyveri (strain NBRC 12016).